A 258-amino-acid chain; its full sequence is Snake venom serine protease 2 (258 aa).

Residues 1–18 form the signal peptide; it reads MVLIRVLANLLILQLSYA. The propeptide occupies 19-24; it reads QKSSEL. A Peptidase S1 domain is found at 25–249; it reads VFGGRPCNIN…YNDWVQSIIA (225 aa). 6 disulfide bridges follow: C31/C163, C50/C66, C98/C256, C142/C210, C174/C189, and C200/C225. An N-linked (GlcNAc...) asparagine glycan is attached at N44. Active-site charge relay system residues include H65 and D110. N-linked (GlcNAc...) asparagine glycans are attached at residues N122 and N185. The Charge relay system role is filled by S204.

The protein belongs to the peptidase S1 family. Snake venom subfamily. In terms of assembly, monomer. In terms of tissue distribution, expressed by the venom gland.

The protein resides in the secreted. Inhibited by PMSF at 2 mM concentration but not by EDTA. In terms of biological role, snake venom serine protease that may act in the hemostasis system of the prey. Has weak fibrinogen clotting activity. Possesses amidolysis activity towards S-2251 (substrate for plasmin) but has no hydrolytic activity with S-2302 (plasma kallikrein substrate) or S-2238 (thrombin substrate). The protein is Snake venom serine protease 2 of Protobothrops jerdonii (Jerdon's pitviper).